A 212-amino-acid polypeptide reads, in one-letter code: Large ribosomal subunit protein bL25 (212 aa).

Positions 1 to 25 (MSQSTIHKIAVKKRTETGKNENNRL) are disordered. Residues 13-24 (KRTETGKNENNR) show a composition bias toward basic and acidic residues.

Belongs to the bacterial ribosomal protein bL25 family. CTC subfamily. Part of the 50S ribosomal subunit; part of the 5S rRNA/L5/L18/L25 subcomplex. Contacts the 5S rRNA. Binds to the 5S rRNA independently of L5 and L18.

This is one of the proteins that binds to the 5S RNA in the ribosome where it forms part of the central protuberance. The protein is Large ribosomal subunit protein bL25 of Leptospira borgpetersenii serovar Hardjo-bovis (strain JB197).